The primary structure comprises 217 residues: ATP-binding protein BexA (217 aa).

The ABC transporter domain maps to 2–217 (IRVNNVCKKY…AYQYYNETQK (216 aa)). 38 to 45 (GRNGAGKS) is an ATP binding site.

This sequence belongs to the ABC transporter superfamily.

Its subcellular location is the cell inner membrane. Putative ATP-binding protein, and an energy-coupling component of capsule polysaccharide export apparatus. In Haemophilus influenzae, this protein is ATP-binding protein BexA (bexA).